A 587-amino-acid polypeptide reads, in one-letter code: Pyruvate decarboxylase 3 (587 aa).

Aspartate 48 and histidine 135 together coordinate substrate. Residues 415 to 496 form a thiamine pyrophosphate binding region; it reads DSWFNCQKLR…FLINNGGYTI (82 aa). Mg(2+)-binding residues include aspartate 464, asparagine 491, and glycine 493. Position 497 (glutamate 497) interacts with substrate.

It belongs to the TPP enzyme family. As to quaternary structure, homotetramer. The cofactor is a metal cation. Requires thiamine diphosphate as cofactor.

It carries out the reaction a 2-oxocarboxylate + H(+) = an aldehyde + CO2. The sequence is that of Pyruvate decarboxylase 3 (PDC3) from Oryza sativa subsp. indica (Rice).